Consider the following 298-residue polypeptide: ADP/ATP translocase 1 (298 aa).

Residues 1 to 7 (MSDQALS) are Mitochondrial intermembrane-facing. S2 is modified (N-acetylserine). The stretch at 6–98 (LSFLKDFLAG…FAFKDKYKQI (93 aa)) is one Solcar 1 repeat. Residue S7 is modified to Phosphoserine. The chain crosses the membrane as a helical span at residues 8-37 (FLKDFLAGGVAAAISKTAVAPIERVKLLLQ). The Mitochondrial matrix portion of the chain corresponds to 38–74 (VQHASKQISAEKQYKGIIDCVVRIPKEQGFLSFWRGN). An N6,N6,N6-trimethyllysine modification is found at K52. K52 is modified (N6-methyllysine). The chain crosses the membrane as a helical span at residues 75 to 99 (LANVIRYFPTQALNFAFKDKYKQIF). ADP-binding residues include R80 and K92. Topologically, residues 100–109 (LGGVDRHKQF) are mitochondrial intermembrane. Residues 110-130 (WRYFAGNLASGGAAGATSLCF) traverse the membrane as a helical segment. Solcar repeat units lie at residues 111-201 (RYFA…AKGM) and 212-297 (VSWM…IKKF). The Mitochondrial matrix segment spans residues 131–178 (VYPLDFARTRLAADVGKGAAQREFTGLGNCITKIFKSDGLRGLYQGFN). At K147 the chain carries N6-succinyllysine. C160 carries the post-translational modification S-nitrosocysteine. The chain crosses the membrane as a helical span at residues 179–199 (VSVQGIIIYRAAYFGVYDTAK). The Mitochondrial intermembrane portion of the chain corresponds to 200 to 210 (GMLPDPKNVHI). Residues 211 to 231 (IVSWMIAQTVTAVAGLVSYPF) traverse the membrane as a helical segment. The Mitochondrial matrix segment spans residues 232–273 (DTVRRRMMMQSGRKGADIMYTGTVDCWRKIAKDEGPKAFFKG). R235 is a binding site for ADP. An important for transport activity region spans residues 235–240 (RRRMMM). The Nucleotide carrier signature motif signature appears at 235–240 (RRRMMM). K245 and K272 each carry N6-succinyllysine. A helical membrane pass occupies residues 274–291 (AWSNVLRGMGGAFVLVLY). Residues 292–298 (DEIKKFV) are Mitochondrial intermembrane-facing.

This sequence belongs to the mitochondrial carrier (TC 2.A.29) family. Monomer. Found in a complex with ARL2, ARL2BP and SLC25A4/ANT1. Interacts with ARL2BP. Interacts with TIMM44; leading to inhibit the presequence translocase TIMM23, thereby promoting stabilization of PINK1. In terms of processing, under cell death induction, transglutaminated by TGM2. Transglutamination leads to formation of covalent cross-links between a glutamine and the epsilon-amino group of a lysine residue, forming polymers. In terms of tissue distribution, detected in heart muscle (at protein level). Detected in heart.

The protein localises to the mitochondrion inner membrane. Its subcellular location is the membrane. It catalyses the reaction ADP(in) + ATP(out) = ADP(out) + ATP(in). The catalysed reaction is H(+)(in) = H(+)(out). Its activity is regulated as follows. The matrix-open state (m-state) is inhibited by the membrane-permeable bongkrekic acid (BKA). The cytoplasmic-open state (c-state) is inhibited by the membrane-impermeable toxic inhibitor carboxyatractyloside (CATR). Proton transporter activity is inhibited by ADP:ATP antiporter activity. Its function is as follows. ADP:ATP antiporter that mediates import of ADP into the mitochondrial matrix for ATP synthesis, and export of ATP out to fuel the cell. Cycles between the cytoplasmic-open state (c-state) and the matrix-open state (m-state): operates by the alternating access mechanism with a single substrate-binding site intermittently exposed to either the cytosolic (c-state) or matrix (m-state) side of the inner mitochondrial membrane. In addition to its ADP:ATP antiporter activity, also involved in mitochondrial uncoupling and mitochondrial permeability transition pore (mPTP) activity. Plays a role in mitochondrial uncoupling by acting as a proton transporter: proton transport uncouples the proton flows via the electron transport chain and ATP synthase to reduce the efficiency of ATP production and cause mitochondrial thermogenesis. Proton transporter activity is inhibited by ADP:ATP antiporter activity, suggesting that SLC25A4/ANT1 acts as a master regulator of mitochondrial energy output by maintaining a delicate balance between ATP production (ADP:ATP antiporter activity) and thermogenesis (proton transporter activity). Proton transporter activity requires free fatty acids as cofactor, but does not transport it. Probably mediates mitochondrial uncoupling in tissues that do not express UCP1. Also plays a key role in mPTP opening, a non-specific pore that enables free passage of the mitochondrial membranes to solutes of up to 1.5 kDa, and which contributes to cell death. It is however unclear if SLC25A4/ANT1 constitutes a pore-forming component of mPTP or regulates it. Acts as a regulator of mitophagy independently of ADP:ATP antiporter activity: promotes mitophagy via interaction with TIMM44, leading to inhibit the presequence translocase TIMM23, thereby promoting stabilization of PINK1. The chain is ADP/ATP translocase 1 from Bos taurus (Bovine).